A 204-amino-acid chain; its full sequence is Large ribosomal subunit protein uL18 (204 aa).

The protein belongs to the universal ribosomal protein uL18 family. In terms of assembly, part of the 50S ribosomal subunit. Contacts the 5S and 23S rRNAs.

Its function is as follows. This is one of the proteins that bind and probably mediate the attachment of the 5S RNA into the large ribosomal subunit, where it forms part of the central protuberance. The protein is Large ribosomal subunit protein uL18 of Ignicoccus hospitalis (strain KIN4/I / DSM 18386 / JCM 14125).